The sequence spans 649 residues: Leucine-rich repeat transmembrane protein FLRT3 (649 aa).

Residues 1 to 28 form the signal peptide; it reads MISPAWSIFLIGTKIGLFLQVAPLSVMA. Residues 29 to 58 enclose the LRRNT domain; that stretch reads KSCPSVCRCDAGFIYCNDRFLTSIPTGIPE. Residues 29-528 are Extracellular-facing; sequence KSCPSVCRCD…KEPYKNPNLP (500 aa). Disulfide bonds link cysteine 31/cysteine 37 and cysteine 35/cysteine 44. The interval 38 to 67 is interaction with ADGRL3; the sequence is DAGFIYCNDRFLTSIPTGIPEDATTLYLQN. LRR repeat units lie at residues 59 to 80, 84 to 104, 105 to 126, 129 to 150, 155 to 176, 177 to 197, 200 to 220, 226 to 247, 248 to 269, and 272 to 293; these read DATTLYLQNNQINNAGIPSDLK, KVERIYLYHNSLDEFPTNLPK, YVKELHLQENNIRTITYDSLSK, YLEELRLDDNSVSAVSIEEGAF, YLRLLFLSRNHLSTIPWGLPRT, IEELRLDDNRIPTISSPSLQG, SLKRLVLDGNLLNNHGLGDKV, NLTELSLVRNSLTAAPVNLPGT, NLRKLYLQDNHINRVPPNAFSY, and QLYRLDMSNNNLSNLPQGIFDD. Residue asparagine 226 is glycosylated (N-linked (GlcNAc...) asparagine). Asparagine 282 and asparagine 296 each carry an N-linked (GlcNAc...) asparagine glycan. The LRRCT domain maps to 305–357; sequence NPWYCGCKMKWVRDWLQSLPVKVNVRGLMCQAPEKVRGMAIKDLNAELFDCKD. Cysteine 309 and cysteine 334 are disulfide-bonded. The disordered stretch occupies residues 385 to 407; it reads VTKQPDIKNPKLTKDHQTTGSPS. The segment covering 389–401 has biased composition (basic and acidic residues); the sequence is PDIKNPKLTKDHQ. The Fibronectin type-III domain maps to 409-504; sequence KTITITVKSV…VCIETETAPL (96 aa). A helical membrane pass occupies residues 529-549; it reads LAAIIGGAVALVTIALLALVC. Over 550-649 the chain is Cytoplasmic; sequence WYVHRNGSLF…GIPDSDHSHS (100 aa). A disordered region spans residues 622-649; sequence LYKNNHSESSSNRSYRDSGIPDSDHSHS.

Monomer and homodimer. Self-associates (via leucine-rich repeats), giving rise to homooligomers. Interacts with FGFR1. Interacts (via extracellular domain) with ADGRL1/LPHN1 and LPHN2 (via olfactomedin-like domain). Interacts (via extracellular domain) with ADGRL3 (via olfactomedin-like domain); the interaction is direct. Interacts (via extracellular domain) with UNC5B and UNC5D (via extracellular domain); the interaction is direct. Identified in complexes composed of FLRT3, ADGRL3 and UNC5B, respectively FLRT3, ADGRL3 and UNC5D. May also interact (via extracellular domain) with UNC5A and UNC5C. Interacts (via cytoplasmic domain) with ROBO1. In terms of processing, N-glycosylated. Proteolytic cleavage in the juxtamembrane region gives rise to a soluble ectodomain. Cleavage is probably effected by a metalloprotease.

It is found in the cell membrane. The protein localises to the presynaptic cell membrane. The protein resides in the endoplasmic reticulum membrane. It localises to the cell junction. Its subcellular location is the focal adhesion. It is found in the secreted. The protein localises to the cell projection. The protein resides in the axon. It localises to the growth cone membrane. Its function is as follows. Functions in cell-cell adhesion, cell migration and axon guidance, exerting an attractive or repulsive role depending on its interaction partners. Plays a role in the spatial organization of brain neurons. Plays a role in vascular development in the retina. Plays a role in cell-cell adhesion via its interaction with ADGRL3 and probably also other latrophilins that are expressed at the surface of adjacent cells. Interaction with the intracellular domain of ROBO1 mediates axon attraction towards cells expressing NTN1. Mediates axon growth cone collapse and plays a repulsive role in neuron guidance via its interaction with UNC5B, and possibly also other UNC-5 family members. Promotes neurite outgrowth (in vitro). Mediates cell-cell contacts that promote an increase both in neurite number and in neurite length. Plays a role in the regulation of the density of glutamaergic synapses. Plays a role in fibroblast growth factor-mediated signaling cascades. Required for normal morphogenesis during embryonic development, but not for normal embryonic patterning. Required for normal ventral closure, headfold fusion and definitive endoderm migration during embryonic development. Required for the formation of a normal basement membrane and the maintenance of a normal anterior visceral endoderm during embryonic development. The sequence is that of Leucine-rich repeat transmembrane protein FLRT3 (FLRT3) from Pongo abelii (Sumatran orangutan).